The following is a 317-amino-acid chain: Glucose-6-phosphate isomerase, cytosolic 2B (317 aa).

E108 serves as the catalytic Proton donor. Residues H139 and K264 contribute to the active site.

The protein belongs to the GPI family. In terms of assembly, homodimer.

It is found in the cytoplasm. The enzyme catalyses alpha-D-glucose 6-phosphate = beta-D-fructose 6-phosphate. It functions in the pathway carbohydrate degradation; glycolysis; D-glyceraldehyde 3-phosphate and glycerone phosphate from D-glucose: step 2/4. The chain is Glucose-6-phosphate isomerase, cytosolic 2B (PGIC2-B) from Clarkia lewisii (Farewell-to-spring).